A 1006-amino-acid polypeptide reads, in one-letter code: Zinc finger protein ZFPM1 (1006 aa).

Residues 1–13 (MSRRKQSNPRQIK) are compositionally biased toward basic residues. Disordered stretches follow at residues 1–93 (MSRR…DELE) and 114–133 (SWGP…RQAE). The span at 15–25 (SLGDMEAREEV) shows a compositional bias: basic and acidic residues. Residues 42-62 (APSPPSADVNSPPPLPPPTSP) are compositionally biased toward pro residues. The segment covering 66–79 (KELEGQEPEPRPTE) has biased composition (basic and acidic residues). Phosphoserine occurs at positions 84 and 128. The segment covering 121-130 (SVQTRASSPR) has biased composition (polar residues). The segment at 235–268 (VINKDVFPCKDCGIWYRSERNLQAHLLYYCASRQ) adopts a CCHC FOG-type 1 zinc-finger fold. The Zn(2+) site is built by cysteine 243, cysteine 246, histidine 259, and cysteine 264. Serine 272 is subject to Phosphoserine. 3 consecutive C2H2-type zinc fingers follow at residues 290–314 (RVCP…MRSH), 320–342 (FVCL…LKVH), and 348–371 (GVCH…VTNH). The interval 330–341 (TTKANCERHLKV) is interaction with TACC3. The residue at position 384 (serine 384) is a Phosphoserine. 3 disordered regions span residues 384 to 409 (SPGA…HTAL), 438 to 460 (NGEA…AAPR), and 473 to 515 (APIL…SPVP). Positions 485-515 (APSRTPSPRSPAPARVKAELSSPTPGSSPVP) are enriched in low complexity. Phosphoserine is present on residues serine 491 and serine 494. Residues 571 to 604 (PGAPKGATCFECEITFSNVNNYYVHKRLYCSGRR) form a CCHC FOG-type 2 zinc finger. Zn(2+)-binding residues include cysteine 579, cysteine 582, histidine 595, and cysteine 600. A disordered region spans residues 605-681 (APEDAPAARR…SVDDAEDDPS (77 aa)). Residues 617–629 (APPGPARAPPGQP) show a composition bias toward pro residues. Serine 638 and serine 671 each carry phosphoserine. The CCHC FOG-type 3 zinc-finger motif lies at 677–710 (EDDPSRTLCEACNIRFSRHETYTVHKRYYCASRH). 4 residues coordinate Zn(2+): cysteine 685, cysteine 688, histidine 701, and cysteine 706. The interval 708–810 (SRHDPPPRRP…PRRPLPGAPA (103 aa)) is disordered. Composition is skewed to pro residues over residues 715–735 (RRPA…PSPA) and 754–769 (APPP…PESP). The segment covering 780–791 (GLAPARSPGPAA) has biased composition (low complexity). The residue at position 786 (serine 786) is a Phosphoserine. An interaction with CTBP2 region spans residues 794-800 (PIDLSKK). The CCHC FOG-type 4 zinc finger occupies 811-844 (PALADYHECTACRVSFHSLEAYLAHKKYSCPAAP). Residues cysteine 819, cysteine 822, histidine 835, and cysteine 840 each coordinate Zn(2+). The C2H2-type 4 zinc finger occupies 854–877 (AACPYCPPNGPVRGDLLEHFRLAH). The segment at 889–971 (GVEARTPADR…KGTPAPLPNG (83 aa)) is disordered. A phosphoserine mark is found at serine 901, serine 909, serine 914, and serine 935. Residues 925-950 (PQEPPPGPPPSPAAAPEAVPPPPAPP) show a composition bias toward pro residues. The CCHC FOG-type 5 zinc finger occupies 968-1001 (LPNGNHRYCRLCNIKFSSLSTFIAHKKYYCSSHA). Zn(2+) is bound by residues cysteine 976, cysteine 979, histidine 992, and cysteine 997.

This sequence belongs to the FOG (Friend of GATA) family. As to quaternary structure, interacts with corepressor CTBP2; this interaction is however not essential for corepressor activity. Interacts with the N-terminal zinc-finger of GATA1, GATA2 and probably GATA3. In terms of tissue distribution, mainly expressed in hematopoietic tissues. Also expressed in adult cerebellum, stomach, lymph node, liver and pancreas. Expressed in fetal heart, liver and spleen.

The protein resides in the nucleus. Transcription regulator that plays an essential role in erythroid and megakaryocytic cell differentiation. Essential cofactor that acts via the formation of a heterodimer with transcription factors of the GATA family GATA1, GATA2 and GATA3. Such heterodimer can both activate or repress transcriptional activity, depending on the cell and promoter context. The heterodimer formed with GATA proteins is essential to activate expression of genes such as NFE2, ITGA2B, alpha- and beta-globin, while it represses expression of KLF1. May be involved in regulation of some genes in gonads. May also be involved in cardiac development, in a non-redundant way with ZFPM2/FOG2. In Homo sapiens (Human), this protein is Zinc finger protein ZFPM1 (ZFPM1).